The following is an 877-amino-acid chain: Phosphoenolpyruvate carboxylase (877 aa).

Catalysis depends on residues histidine 138 and lysine 544.

It belongs to the PEPCase type 1 family. The cofactor is Mg(2+).

It carries out the reaction oxaloacetate + phosphate = phosphoenolpyruvate + hydrogencarbonate. In terms of biological role, forms oxaloacetate, a four-carbon dicarboxylic acid source for the tricarboxylic acid cycle. This is Phosphoenolpyruvate carboxylase from Vibrio parahaemolyticus serotype O3:K6 (strain RIMD 2210633).